Consider the following 238-residue polypeptide: Citrate-binding protein (238 aa).

An N-terminal signal peptide occupies residues 1 to 31 (MKMKRSPYCFCCSFALLLLVSFLKDRHFCSA). A propeptide spans 225-238 (LEGCNNNHGTWLVQ) (removed in mature form).

It localises to the vacuole. In terms of biological role, may be a subunit of a vacuolar malate and citrate transporter. The polypeptide is Citrate-binding protein (CBP) (Hevea brasiliensis (Para rubber tree)).